Consider the following 267-residue polypeptide: Acetyl-coenzyme A carboxylase carboxyl transferase subunit beta 1 (267 aa).

Residues 9-267 form the CoA carboxyltransferase N-terminal domain; the sequence is TWQACPKCGR…NYGIGRSAHG (259 aa). The Zn(2+) site is built by Cys-13, Cys-16, Cys-31, and Cys-34. A C4-type zinc finger spans residues 13-34; sequence CPKCGRHVHQRQWGTYQQCPYC.

It belongs to the AccD/PCCB family. In terms of assembly, acetyl-CoA carboxylase is a heterohexamer composed of biotin carboxyl carrier protein (AccB), biotin carboxylase (AccC) and two subunits each of ACCase subunit alpha (AccA) and ACCase subunit beta (AccD). The cofactor is Zn(2+).

The protein resides in the cytoplasm. It catalyses the reaction N(6)-carboxybiotinyl-L-lysyl-[protein] + acetyl-CoA = N(6)-biotinyl-L-lysyl-[protein] + malonyl-CoA. It participates in lipid metabolism; malonyl-CoA biosynthesis; malonyl-CoA from acetyl-CoA: step 1/1. Functionally, component of the acetyl coenzyme A carboxylase (ACC) complex. Biotin carboxylase (BC) catalyzes the carboxylation of biotin on its carrier protein (BCCP) and then the CO(2) group is transferred by the transcarboxylase to acetyl-CoA to form malonyl-CoA. The protein is Acetyl-coenzyme A carboxylase carboxyl transferase subunit beta 1 of Lactiplantibacillus plantarum (strain JDM1) (Lactobacillus plantarum).